Reading from the N-terminus, the 269-residue chain is Chymotrypsin-like elastase family member 2A (269 aa).

The N-terminal stretch at 1 to 16 (MIRALLLSTLVAGALS) is a signal peptide. Residues 17 to 28 (CGLPANLPQLPR) constitute a propeptide, activation peptide. In terms of domain architecture, Peptidase S1 spans 29–267 (VVGGEDARPN…YIDWINSVIA (239 aa)). An intrachain disulfide couples cysteine 58 to cysteine 74. Active-site charge relay system residues include histidine 73 and aspartate 121. 3 cysteine pairs are disulfide-bonded: cysteine 155/cysteine 222, cysteine 186/cysteine 202, and cysteine 212/cysteine 243. Serine 216 functions as the Charge relay system in the catalytic mechanism.

Belongs to the peptidase S1 family. Elastase subfamily. In terms of assembly, interacts with CPA1. Interacts with SERPINA1. Pancreas.

The protein localises to the secreted. It catalyses the reaction Preferential cleavage: Leu-|-Xaa, Met-|-Xaa and Phe-|-Xaa. Hydrolyzes elastin.. Functionally, elastase that enhances insulin signaling and might have a physiologic role in cellular glucose metabolism. Circulates in plasma and reduces platelet hyperactivation, triggers both insulin secretion and degradation, and increases insulin sensitivity. The chain is Chymotrypsin-like elastase family member 2A (CELA2A) from Sus scrofa (Pig).